Here is a 259-residue protein sequence, read N- to C-terminus: L-ornithine N(alpha)-acyltransferase (259 aa).

It belongs to the acetyltransferase family. OlsB subfamily.

The catalysed reaction is a (3R)-hydroxyacyl-[ACP] + L-ornithine = a lyso-ornithine lipid + holo-[ACP] + H(+). It functions in the pathway lipid metabolism. Functionally, catalyzes the first step in the biosynthesis of ornithine lipids, which are phosphorus-free membrane lipids. Catalyzes the 3-hydroxyacyl-acyl carrier protein-dependent acylation of ornithine to form lyso-ornithine lipid (LOL). The chain is L-ornithine N(alpha)-acyltransferase from Rhodobacter capsulatus (strain ATCC BAA-309 / NBRC 16581 / SB1003).